The following is a 486-amino-acid chain: Chromosomal replication initiator protein DnaA (486 aa).

A domain I, interacts with DnaA modulators region spans residues 1 to 79 (MEKSKNIWSL…GYNNIVIVFT (79 aa)). Residues 79–141 (TNQPPKTHSN…EEEPTNFKNP (63 aa)) form a domain II region. Positions 142–358 (FLKKRYTFEN…AAVTKLKAYI (217 aa)) are domain III, AAA+ region. Residues Gly186, Gly188, Lys189, and Thr190 each contribute to the ATP site. Residues 359–486 (DLDNIEIDIE…TELMNKIKKN (128 aa)) form a domain IV, binds dsDNA region.

It belongs to the DnaA family. Oligomerizes as a right-handed, spiral filament on DNA at oriC.

It is found in the cytoplasm. In terms of biological role, plays an essential role in the initiation and regulation of chromosomal replication. ATP-DnaA binds to the origin of replication (oriC) to initiate formation of the DNA replication initiation complex once per cell cycle. Binds the DnaA box (a 9 base pair repeat at the origin) and separates the double-stranded (ds)DNA. Forms a right-handed helical filament on oriC DNA; dsDNA binds to the exterior of the filament while single-stranded (ss)DNA is stabiized in the filament's interior. The ATP-DnaA-oriC complex binds and stabilizes one strand of the AT-rich DNA unwinding element (DUE), permitting loading of DNA polymerase. After initiation quickly degrades to an ADP-DnaA complex that is not apt for DNA replication. Binds acidic phospholipids. Functionally, binds to the bpuR promoter, possibly at 5'-TTTTTAAA-3'. The polypeptide is Chromosomal replication initiator protein DnaA (Borreliella burgdorferi (strain ATCC 35210 / DSM 4680 / CIP 102532 / B31) (Borrelia burgdorferi)).